Reading from the N-terminus, the 803-residue chain is Phenylalanine--tRNA ligase beta subunit (803 aa).

Residues 40 to 150 (SNKFYGIVIA…IDAPIGCNFY (111 aa)) enclose the tRNA-binding domain. Positions 405 to 480 (PKIKIIKLHR…RIYGYNHIPK (76 aa)) constitute a B5 domain. Residues Asp-458 and Glu-468 each coordinate Mg(2+). Residues 710–803 (SKFPKNYRDI…LKKHFNAIFR (94 aa)) enclose the FDX-ACB domain.

Belongs to the phenylalanyl-tRNA synthetase beta subunit family. Type 1 subfamily. As to quaternary structure, tetramer of two alpha and two beta subunits. It depends on Mg(2+) as a cofactor.

Its subcellular location is the cytoplasm. The enzyme catalyses tRNA(Phe) + L-phenylalanine + ATP = L-phenylalanyl-tRNA(Phe) + AMP + diphosphate + H(+). The protein is Phenylalanine--tRNA ligase beta subunit of Blochmanniella floridana.